The sequence spans 795 residues: Phenylalanine--tRNA ligase beta subunit (795 aa).

The tRNA-binding domain maps to 39–148 (AGDFSGVVVG…QNAPVGTNLR (110 aa)). A B5 domain is found at 401 to 476 (PKLNQVSLRR…RIYGYNSIPN (76 aa)). D454, D460, E463, and E464 together coordinate Mg(2+). Residues 701-794 (SRFPANRRDL…LKQRFNAYLR (94 aa)) form the FDX-ACB domain.

Belongs to the phenylalanyl-tRNA synthetase beta subunit family. Type 1 subfamily. As to quaternary structure, tetramer of two alpha and two beta subunits. It depends on Mg(2+) as a cofactor.

Its subcellular location is the cytoplasm. It carries out the reaction tRNA(Phe) + L-phenylalanine + ATP = L-phenylalanyl-tRNA(Phe) + AMP + diphosphate + H(+). This chain is Phenylalanine--tRNA ligase beta subunit (pheT), found in Pasteurella multocida (strain Pm70).